Reading from the N-terminus, the 601-residue chain is Elongation factor 4 (601 aa).

Residues 6–188 (SHIRNFSIIA…QIVHRVPPPE (183 aa)) form the tr-type G domain. GTP-binding positions include 18–23 (DHGKST) and 135–138 (NKID).

It belongs to the TRAFAC class translation factor GTPase superfamily. Classic translation factor GTPase family. LepA subfamily.

It localises to the cell inner membrane. It catalyses the reaction GTP + H2O = GDP + phosphate + H(+). Its function is as follows. Required for accurate and efficient protein synthesis under certain stress conditions. May act as a fidelity factor of the translation reaction, by catalyzing a one-codon backward translocation of tRNAs on improperly translocated ribosomes. Back-translocation proceeds from a post-translocation (POST) complex to a pre-translocation (PRE) complex, thus giving elongation factor G a second chance to translocate the tRNAs correctly. Binds to ribosomes in a GTP-dependent manner. This Anaeromyxobacter dehalogenans (strain 2CP-C) protein is Elongation factor 4.